A 139-amino-acid polypeptide reads, in one-letter code: Nucleoside diphosphate kinase (139 aa).

Positions 10, 58, 86, 92, 103, and 113 each coordinate ATP. Histidine 116 functions as the Pros-phosphohistidine intermediate in the catalytic mechanism.

It belongs to the NDK family. As to quaternary structure, homotetramer. It depends on Mg(2+) as a cofactor.

The protein localises to the cytoplasm. It catalyses the reaction a 2'-deoxyribonucleoside 5'-diphosphate + ATP = a 2'-deoxyribonucleoside 5'-triphosphate + ADP. The enzyme catalyses a ribonucleoside 5'-diphosphate + ATP = a ribonucleoside 5'-triphosphate + ADP. In terms of biological role, major role in the synthesis of nucleoside triphosphates other than ATP. The ATP gamma phosphate is transferred to the NDP beta phosphate via a ping-pong mechanism, using a phosphorylated active-site intermediate. This is Nucleoside diphosphate kinase from Oleidesulfovibrio alaskensis (strain ATCC BAA-1058 / DSM 17464 / G20) (Desulfovibrio alaskensis).